We begin with the raw amino-acid sequence, 337 residues long: Anthranilate phosphoribosyltransferase (337 aa).

Residues Gly-80, 83–84, Thr-88, 90–93, 108–116, and Ser-120 contribute to the 5-phospho-alpha-D-ribose 1-diphosphate site; these read GD, NIST, and KHGNRAVSS. Gly-80 provides a ligand contact to anthranilate. Mg(2+) is bound at residue Ser-92. Anthranilate is bound at residue Asn-111. Arg-166 serves as a coordination point for anthranilate. Asp-224 and Glu-225 together coordinate Mg(2+).

It belongs to the anthranilate phosphoribosyltransferase family. As to quaternary structure, homodimer. Mg(2+) serves as cofactor.

It carries out the reaction N-(5-phospho-beta-D-ribosyl)anthranilate + diphosphate = 5-phospho-alpha-D-ribose 1-diphosphate + anthranilate. It participates in amino-acid biosynthesis; L-tryptophan biosynthesis; L-tryptophan from chorismate: step 2/5. Its function is as follows. Catalyzes the transfer of the phosphoribosyl group of 5-phosphorylribose-1-pyrophosphate (PRPP) to anthranilate to yield N-(5'-phosphoribosyl)-anthranilate (PRA). This is Anthranilate phosphoribosyltransferase from Anaeromyxobacter sp. (strain Fw109-5).